The sequence spans 663 residues: Translation factor GUF1 homolog, mitochondrial (663 aa).

A mitochondrion-targeting transit peptide spans 1-33 (MAGAAALRRSARRVVLPGAYALSRALQHPERLL). The 193-residue stretch at 55–247 (ERVRNFSIIA…AVIERIPSPP (193 aa)) folds into the tr-type G domain. GTP is bound by residues 64-71 (AHVDHGKS), 140-144 (DTPGH), and 194-197 (NKID).

This sequence belongs to the TRAFAC class translation factor GTPase superfamily. Classic translation factor GTPase family. LepA subfamily.

It is found in the mitochondrion inner membrane. The enzyme catalyses GTP + H2O = GDP + phosphate + H(+). Functionally, promotes mitochondrial protein synthesis. May act as a fidelity factor of the translation reaction, by catalyzing a one-codon backward translocation of tRNAs on improperly translocated ribosomes. Binds to mitochondrial ribosomes in a GTP-dependent manner. This is Translation factor GUF1 homolog, mitochondrial from Oryza sativa subsp. japonica (Rice).